Consider the following 97-residue polypeptide: RNA-binding protein YhbY (97 aa).

The 97-residue stretch at 1-97 folds into the CRM domain; the sequence is MNLSTKQKQH…TKERKISLPR (97 aa).

This chain is RNA-binding protein YhbY (yhbY), found in Escherichia coli O157:H7.